Reading from the N-terminus, the 48-residue chain is ATP synthase protein 8 (48 aa).

The chain crosses the membrane as a helical span at residues 13 to 32 (LVYGFALVTILLVLFAQYFL).

The protein belongs to the ATPase protein 8 family. F-type ATPases have 2 components, CF(1) - the catalytic core - and CF(0) - the membrane proton channel.

The protein localises to the mitochondrion membrane. In terms of biological role, mitochondrial membrane ATP synthase (F(1)F(0) ATP synthase or Complex V) produces ATP from ADP in the presence of a proton gradient across the membrane which is generated by electron transport complexes of the respiratory chain. F-type ATPases consist of two structural domains, F(1) - containing the extramembraneous catalytic core and F(0) - containing the membrane proton channel, linked together by a central stalk and a peripheral stalk. During catalysis, ATP synthesis in the catalytic domain of F(1) is coupled via a rotary mechanism of the central stalk subunits to proton translocation. Part of the complex F(0) domain. Minor subunit located with subunit a in the membrane. The protein is ATP synthase protein 8 (ATP8) of Kluyveromyces lactis (strain ATCC 8585 / CBS 2359 / DSM 70799 / NBRC 1267 / NRRL Y-1140 / WM37) (Yeast).